Here is a 261-residue protein sequence, read N- to C-terminus: Putative glyoxylase CFP32 (261 aa).

2 VOC domains span residues 11-129 (TPNW…LWQA) and 143-257 (TLIW…VLKP). Glyoxalase stretches follow at residues 13 to 123 (NWVD…TGAA) and 149 to 252 (LLTD…GAIF).

This Mycobacterium bovis (strain ATCC BAA-935 / AF2122/97) protein is Putative glyoxylase CFP32.